A 462-amino-acid chain; its full sequence is UDP-N-acetylmuramoylalanine--D-glutamate ligase (462 aa).

Residue 125 to 131 coordinates ATP; sequence GSDGKTT.

This sequence belongs to the MurCDEF family.

Its subcellular location is the cytoplasm. It carries out the reaction UDP-N-acetyl-alpha-D-muramoyl-L-alanine + D-glutamate + ATP = UDP-N-acetyl-alpha-D-muramoyl-L-alanyl-D-glutamate + ADP + phosphate + H(+). Its pathway is cell wall biogenesis; peptidoglycan biosynthesis. Cell wall formation. Catalyzes the addition of glutamate to the nucleotide precursor UDP-N-acetylmuramoyl-L-alanine (UMA). This chain is UDP-N-acetylmuramoylalanine--D-glutamate ligase, found in Clostridium acetobutylicum (strain ATCC 824 / DSM 792 / JCM 1419 / IAM 19013 / LMG 5710 / NBRC 13948 / NRRL B-527 / VKM B-1787 / 2291 / W).